Reading from the N-terminus, the 762-residue chain is LON peptidase N-terminal domain and RING finger protein 1 (762 aa).

The segment at 1-35 is disordered; the sequence is MSSPAVARASPGGNREASGGPRSRNGPWEVGGGGE. A TPR 1 repeat occupies 47 to 80; sequence WELLLRRGELLALGGHLKGALEAFAAALRRGAPA. The RING-type 1 zinc finger occupies 118–154; sequence CLSCRGFLSEPVTVPCGHSYCRRCLRRELRARCRLCR. TPR repeat units follow at residues 201 to 233, 235 to 267, and 268 to 301; these read ARAA…EPSD, TLKI…LPNW, and PEVY…DEDF. Ser-420 bears the Phosphoserine mark. The segment at 468 to 506 adopts an RING-type 2 zinc-finger fold; that stretch reads CSLCMRLFFEPVTTPCGHSFCKNCLERCLDHAPYCPLCK. The Lon N-terminal domain occupies 547 to 757; the sequence is TAELSHLTKN…KIQHILTYFS (211 aa).

The chain is LON peptidase N-terminal domain and RING finger protein 1 (Lonrf1) from Mus musculus (Mouse).